The sequence spans 234 residues: Ubiquitin thioesterase OTUB2 (234 aa).

The OTU domain occupies 40-231 (TAIRKTKGDG…TSHYNILYAA (192 aa)). The active site involves D48. The active-site Nucleophile is C51. Residue H224 is part of the active site.

It belongs to the peptidase C65 family. Widely expressed. Expressed at higher level in brain.

It catalyses the reaction Thiol-dependent hydrolysis of ester, thioester, amide, peptide and isopeptide bonds formed by the C-terminal Gly of ubiquitin (a 76-residue protein attached to proteins as an intracellular targeting signal).. Functionally, hydrolase that can remove conjugated ubiquitin from proteins in vitro and may therefore play an important regulatory role at the level of protein turnover by preventing degradation. Mediates deubiquitination of 'Lys-11'-,'Lys-48'- and 'Lys-63'-linked polyubiquitin chains, with a preference for 'Lys-63'-linked polyubiquitin chains. This chain is Ubiquitin thioesterase OTUB2 (OTUB2), found in Homo sapiens (Human).